Consider the following 337-residue polypeptide: Glycine N(alpha)-acyltransferase (337 aa).

This sequence belongs to the acetyltransferase family.

The catalysed reaction is a (3R)-hydroxyacyl-[ACP] + glycine = a lyso-glycine lipid + holo-[ACP] + H(+). The enzyme catalyses (3R)-hydroxyhexadecanoyl-[ACP] + glycine = N-[(3R)-3-hydroxyhexadecanoyl]-glycine + holo-[ACP] + H(+). Its pathway is lipid metabolism. Is involved in the production of glycine lipids (GL), which are phosphorus-free membrane lipids important for fitness during growth of the human gut bacterium B.thetaiotaomicron in vivo and in vitro. Catalyzes the first step of GL biosynthesis, i.e. the N-acylation of glycine via addition of a 3-hydroxy fatty acyl group, to form a range of monoacylated glycine (also named lyso-glycine lipids or lyso-GL). Is important for the ability of B.thetaiotaomicron to adapt to stress and colonize the mammalian gut. Also seems to be required for the production of flavolipin, an acylated serine-glycine dipeptide. The sequence is that of Glycine N(alpha)-acyltransferase from Bacteroides thetaiotaomicron (strain ATCC 29148 / DSM 2079 / JCM 5827 / CCUG 10774 / NCTC 10582 / VPI-5482 / E50).